A 211-amino-acid chain; its full sequence is UPF0502 protein PC1_1804 (211 aa).

Residues 168–188 form a disordered region; that stretch reads SGDASDAAPEEEGAGDNSHQL.

This sequence belongs to the UPF0502 family.

The chain is UPF0502 protein PC1_1804 from Pectobacterium carotovorum subsp. carotovorum (strain PC1).